The following is a 1165-amino-acid chain: Pesticidal crystal protein Cry1Da (1165 aa).

It belongs to the delta endotoxin family.

In terms of biological role, promotes colloidosmotic lysis by binding to the midgut epithelial cells of many lepidopteran larvae. The sequence is that of Pesticidal crystal protein Cry1Da (cry1Da) from Bacillus thuringiensis subsp. aizawai.